A 720-amino-acid chain; its full sequence is DNA ligase (720 aa).

NAD(+) contacts are provided by residues 60-64 (DYDYD), 109-110 (SL), and Glu140. Lys142 serves as the catalytic N6-AMP-lysine intermediate. NAD(+) contacts are provided by Arg163 and Glu201. Residues 220–239 (GLPPFANPRNAAAGSIRQKD) form a disordered region. 2 residues coordinate NAD(+): Lys320 and Lys344. Zn(2+) contacts are provided by Cys438, Cys441, Cys456, and Cys461. Positions 619–709 (KVADVLKGKT…VDLEKIKKED (91 aa)) constitute a BRCT domain.

Belongs to the NAD-dependent DNA ligase family. LigA subfamily. The cofactor is Mn(2+). It depends on Mg(2+) as a cofactor.

It catalyses the reaction NAD(+) + (deoxyribonucleotide)n-3'-hydroxyl + 5'-phospho-(deoxyribonucleotide)m = (deoxyribonucleotide)n+m + AMP + beta-nicotinamide D-nucleotide.. In terms of biological role, DNA ligase that catalyzes the formation of phosphodiester linkages between 5'-phosphoryl and 3'-hydroxyl groups in double-stranded DNA using NAD as a coenzyme and as the energy source for the reaction. It is essential for DNA replication and repair of damaged DNA. The chain is DNA ligase from Aquifex aeolicus (strain VF5).